A 128-amino-acid polypeptide reads, in one-letter code: DNA-directed RNA polymerase subunit omega (128 aa).

It belongs to the RNA polymerase subunit omega family. As to quaternary structure, the RNAP catalytic core consists of 2 alpha, 1 beta, 1 beta' and 1 omega subunit. When a sigma factor is associated with the core the holoenzyme is formed, which can initiate transcription.

The enzyme catalyses RNA(n) + a ribonucleoside 5'-triphosphate = RNA(n+1) + diphosphate. Promotes RNA polymerase assembly. Latches the N- and C-terminal regions of the beta' subunit thereby facilitating its interaction with the beta and alpha subunits. The protein is DNA-directed RNA polymerase subunit omega of Neorickettsia sennetsu (strain ATCC VR-367 / Miyayama) (Ehrlichia sennetsu).